The sequence spans 777 residues: Zinc finger FYVE domain-containing protein 1 (777 aa).

A required for localization in the lipid droplets region spans residues 416-777 (MAHSSFFPDE…FNCNKKPGDL (362 aa)). 2 consecutive FYVE-type zinc fingers follow at residues 598-659 (NSQI…EARN) and 715-775 (DHEI…KKPG). Residues Cys604, Cys607, Cys620, Cys623, Cys628, Cys631, Cys651, Cys654, Cys721, Cys724, Cys737, Cys740, Cys745, Cys748, Cys767, and Cys770 each contribute to the Zn(2+) site.

As to quaternary structure, interacts with RAB18 (in GTP-bound form). Interacts with BSCL2 in a RAB18-dependent manner. Interacts with ZW10. In terms of assembly, (Microbial infection) Interacts with SARS coronavirus-2/SARS-CoV-2 non-structural protein 6 (nsp6); the interaction is independent of PtdIns3P-binding and leads to endoplasmic reticulum (ER) and double membrane vesicles (DMVs) binding to lipid droplets. Highly expressed in heart. Also detected in the testis. In terms of tissue distribution, expressed in all tissues examined, including, brain, placenta, lung, liver, skeletal muscle, pancreas and kidney. Highly expressed in heart.

The protein localises to the golgi apparatus. The protein resides in the golgi stack. Its subcellular location is the endoplasmic reticulum. It localises to the lipid droplet. It is found in the preautophagosomal structure. The protein localises to the mitochondrion. Plays a role in the formation of lipid droplets (LDs) which are storage organelles at the center of lipid and energy homeostasis. Regulates the morphology, size and distribution of LDs. Mediates the formation of endoplasmic reticulum-lipid droplets (ER-LD) contacts by forming a complex with RAB18 and ZW10. Binds to phosphatidylinositol 3-phosphate (PtdIns3P) through FYVE-type zinc finger. In terms of biological role, (Microbial infection) Upon SARS coronavirus-2/SARS-CoV-2 infection, mediates through binding with non-structural protein 6 (nsp6) the replication organelle-lipid droplet association required to sustain viral replication. The protein is Zinc finger FYVE domain-containing protein 1 (ZFYVE1) of Homo sapiens (Human).